The sequence spans 341 residues: Transmembrane protein 120A-A (341 aa).

Residues 1 to 131 (MLFNPTGLTE…KQSKFAYKDE (131 aa)) are Cytoplasmic-facing. Position 129 (K129) interacts with CoA. Residues 132-151 (YEKFKLYLTVLLLFFSFTCR) traverse the membrane as a helical segment. Topologically, residues 152–157 (FLVSYR) are extracellular. Residues 158–176 (VVDALFNFLLVWYYCTLTI) traverse the membrane as a helical segment. Residues 177–189 (RESILINNGSKIK) are Cytoplasmic-facing. Residues S186 and K187 each coordinate CoA. The chain crosses the membrane as a helical span at residues 190-208 (GWWVFQHYVSTFLSGVMLT). The Extracellular portion of the chain corresponds to 209–217 (WPDGELYQM). A helical transmembrane segment spans residues 218–239 (FRNQFLSYSMYINFVQFFQYYY). CoA is bound by residues Q236, Y239, Q240, and H282. At 240–269 (QSGCLYRLRALGERHNMDLTVEGFQSWMWR) the chain is on the cytoplasmic side. A helical membrane pass occupies residues 270-293 (GLTFLLPFLFLGHFFQLYNGITLF). Residues 294–303 (QMTQLPEWKE) are Extracellular-facing. Residues 304-329 (WQVLMCGSTFLVLFMGNFFTTLGVVY) traverse the membrane as a helical segment. The Cytoplasmic portion of the chain corresponds to 330-341 (HKYMDQDKAKGL). K331 serves as a coordination point for CoA.

The protein belongs to the TMEM120 family. As to quaternary structure, homodimer.

Its subcellular location is the cell membrane. The protein localises to the nucleus inner membrane. It localises to the endoplasmic reticulum. Its function is as follows. Multifunctional protein involved in mechanosensation, and plays an essential role in lipid metabolism. May function as a potential ion channel involved in sensing mechanical stimuli. TMEM120A is structurally similar to a lipid-modifying enzyme, ELOVL7, and contains a bound coenzyme A molecule, which suggests it might function as an enzyme in lipid metabolism. The sequence is that of Transmembrane protein 120A-A (tmem120aa) from Danio rerio (Zebrafish).